Reading from the N-terminus, the 833-residue chain is MAYYNHKEIEPKWQKYWAEHHTFKTGTDKDKPNFYALDMFPYPSGAGLHVGHPEGYTATDILSRYKRTQGYNVLHPMGWDAFGLPAEQYAMDTGNDPADFTAENIANFKRQINALGFSYDWDREINTTDPNYYKWTQWIFTKLYEKGLAYEAEVPVNWVEELGTAIANEEVLPDGTSERGGYPVVRKPMRQWMLKITAYAERLLNDLEELDWPESIKDMQRNWIGKSTGANVTFKIKDTDKDFTVFTTRPDTLFGATYAVLAPEHALVDAITSAEQAQAVADYKHAASLKSDLARTDLAKDKTGVWTGAYAINPVNGKEIPIWIADYVLASYGTGAIMAVPAHDERDWEFAKQFDLEIIPVLEGGNVAEAAYTEDGPHINSGFLDGLDKAAAIDKMVAWLEAEGVGNEKVTYRLRDWLFSRQRYWGEPIPIIHWEDGTSTAVPENELPLVLPVTKDIRPSGTGESPLANLTDWLEVTREDGVKGRRETNTMPQWAGSSWYYLRYIDPHNNEKLADEELLKAWLPVDIYIGGAEHAVLHLLYARFWHKFLYDIGVVPTKEPFQKLFNQGMILGTSYRDSRCALVATDKVEKRDGSFFNIETGEELEQAPAKMSKSLKNVVNPDDVVEQYGADTLRVYEMFMGPLDASIAWSEEGLEGSRKFLDRVYRLFNSKELVTENSGALDKVYHETVKSVTEQIEELKFNTAIAQLMIFVNAANKEEKLYVEYAKGFIQLLAPFAPHLAEELWQAVAQTGESISYVTWPTYDESKLVEAEVEIVVQIKGKVRAKLVVAKDLSREELQEIALSDEKIKSEIAGKEIVKVISVPNKLVNIVVK.

Residues 41-52 (PYPSGAGLHVGH) carry the 'HIGH' region motif. A 'KMSKS' region motif is present at residues 610–614 (KMSKS). Lysine 613 serves as a coordination point for ATP.

This sequence belongs to the class-I aminoacyl-tRNA synthetase family.

It localises to the cytoplasm. It catalyses the reaction tRNA(Leu) + L-leucine + ATP = L-leucyl-tRNA(Leu) + AMP + diphosphate. This chain is Leucine--tRNA ligase, found in Streptococcus sanguinis (strain SK36).